The chain runs to 391 residues: GTPase Obg (391 aa).

The region spanning 1–159 is the Obg domain; the sequence is MKFIDEALIR…RDLLLELMLL (159 aa). Residues 160–333 form the OBG-type G domain; sequence ADVGMLGLPN…LTRDIMDFIE (174 aa). Residues 166–173, 191–195, 213–216, 283–286, and 314–316 contribute to the GTP site; these read GLPNAGKS, FTTLV, DIPG, NKID, and SAA. Positions 173 and 193 each coordinate Mg(2+).

This sequence belongs to the TRAFAC class OBG-HflX-like GTPase superfamily. OBG GTPase family. In terms of assembly, monomer. Mg(2+) serves as cofactor.

Its subcellular location is the cytoplasm. An essential GTPase which binds GTP, GDP and possibly (p)ppGpp with moderate affinity, with high nucleotide exchange rates and a fairly low GTP hydrolysis rate. Plays a role in control of the cell cycle, stress response, ribosome biogenesis and in those bacteria that undergo differentiation, in morphogenesis control. In Actinobacillus pleuropneumoniae serotype 5b (strain L20), this protein is GTPase Obg.